The primary structure comprises 203 residues: Urease accessory protein UreG (203 aa).

14-21 (GPVGSGKT) contacts GTP.

Belongs to the SIMIBI class G3E GTPase family. UreG subfamily. As to quaternary structure, homodimer. UreD, UreF and UreG form a complex that acts as a GTP-hydrolysis-dependent molecular chaperone, activating the urease apoprotein by helping to assemble the nickel containing metallocenter of UreC. The UreE protein probably delivers the nickel.

Its subcellular location is the cytoplasm. Facilitates the functional incorporation of the urease nickel metallocenter. This process requires GTP hydrolysis, probably effectuated by UreG. The polypeptide is Urease accessory protein UreG (Rhizobium etli (strain CIAT 652)).